Reading from the N-terminus, the 118-residue chain is MRVKGPSSKKHKKKILKLAKGYYGQKHRSYRRAKEQVMHSLNYAYRDRKDRKRQFRALWITRINAAARLNGLSYSQFINGLKKSGIELDRKILADMAVNDMEAFAKLVETAKKALQAA.

It belongs to the bacterial ribosomal protein bL20 family.

In terms of biological role, binds directly to 23S ribosomal RNA and is necessary for the in vitro assembly process of the 50S ribosomal subunit. It is not involved in the protein synthesizing functions of that subunit. In Sulfurihydrogenibium sp. (strain YO3AOP1), this protein is Large ribosomal subunit protein bL20.